The primary structure comprises 451 residues: Subtilase-type proteinase psp3 (451 aa).

The signal sequence occupies residues 1 to 20; it reads MRVSWISGLLLVAHLAPSSA. The Inhibitor I9 domain maps to 80 to 161; the sequence is YIVMFKPSVD…LVEPDRVMHV (82 aa). One can recognise a Peptidase S8 domain in the interval 169-451; the sequence is PWGLARVSHR…PNVLAFNNYE (283 aa). Residues D205, H237, and S394 each act as charge relay system in the active site.

This sequence belongs to the peptidase S8 family.

The sequence is that of Subtilase-type proteinase psp3 (psp3) from Schizosaccharomyces pombe (strain 972 / ATCC 24843) (Fission yeast).